Reading from the N-terminus, the 425-residue chain is Probable proline--tRNA ligase, mitochondrial (425 aa).

The protein belongs to the class-II aminoacyl-tRNA synthetase family.

The protein localises to the mitochondrion. It carries out the reaction tRNA(Pro) + L-proline + ATP = L-prolyl-tRNA(Pro) + AMP + diphosphate. This is Probable proline--tRNA ligase, mitochondrial from Schizosaccharomyces pombe (strain 972 / ATCC 24843) (Fission yeast).